The chain runs to 401 residues: Probable trafficking protein particle complex subunit 13 homolog (401 aa).

The protein belongs to the TRAPPC13 family.

The sequence is that of Probable trafficking protein particle complex subunit 13 homolog from Caenorhabditis elegans.